The chain runs to 144 residues: MLMPKRVKYRKQQRGRIKGNATRGNTLTYGEYGLQALEPGWITATQIEAARVAMTRFIKRGGKVWIKIFPDKPVTKKPAETRMGSGKGSPEFWVAVVKPGRVLFEIAGVSEEVAKEALRLAMHKLPIKTKFLKREELGGEDNES.

It belongs to the universal ribosomal protein uL16 family. As to quaternary structure, part of the 50S ribosomal subunit.

In terms of biological role, binds 23S rRNA and is also seen to make contacts with the A and possibly P site tRNAs. In Thermoanaerobacter sp. (strain X514), this protein is Large ribosomal subunit protein uL16.